A 305-amino-acid polypeptide reads, in one-letter code: Glycine--tRNA ligase alpha subunit (305 aa).

It belongs to the class-II aminoacyl-tRNA synthetase family. Tetramer of two alpha and two beta subunits.

The protein localises to the cytoplasm. The catalysed reaction is tRNA(Gly) + glycine + ATP = glycyl-tRNA(Gly) + AMP + diphosphate. In Streptococcus pyogenes serotype M12 (strain MGAS2096), this protein is Glycine--tRNA ligase alpha subunit.